The following is a 254-amino-acid chain: 3-deoxy-manno-octulosonate cytidylyltransferase (254 aa).

It belongs to the KdsB family.

It is found in the cytoplasm. It carries out the reaction 3-deoxy-alpha-D-manno-oct-2-ulosonate + CTP = CMP-3-deoxy-beta-D-manno-octulosonate + diphosphate. The protein operates within nucleotide-sugar biosynthesis; CMP-3-deoxy-D-manno-octulosonate biosynthesis; CMP-3-deoxy-D-manno-octulosonate from 3-deoxy-D-manno-octulosonate and CTP: step 1/1. Its pathway is bacterial outer membrane biogenesis; lipopolysaccharide biosynthesis. Its function is as follows. Activates KDO (a required 8-carbon sugar) for incorporation into bacterial lipopolysaccharide in Gram-negative bacteria. This chain is 3-deoxy-manno-octulosonate cytidylyltransferase, found in Nitrobacter winogradskyi (strain ATCC 25391 / DSM 10237 / CIP 104748 / NCIMB 11846 / Nb-255).